The primary structure comprises 134 residues: uncharacterized protein (134 aa).

It belongs to the ycf68 family.

The protein localises to the plastid. The protein resides in the chloroplast. This is an uncharacterized protein from Saccharum hybrid (Sugarcane).